Here is a 375-residue protein sequence, read N- to C-terminus: Neuropeptide Y receptor type 4 (375 aa).

The Extracellular segment spans residues 1-39; that stretch reads MNTSHLMASLSPAFLQGKNGTNPLDSLYNLSDGCQDSAD. 3 N-linked (GlcNAc...) asparagine glycosylation sites follow: asparagine 2, asparagine 19, and asparagine 29. Residues 40 to 60 traverse the membrane as a helical segment; sequence LLAFIITTYSVETVLGVLGNL. Residues 61–78 are Cytoplasmic-facing; it reads CLIFVTTRQKEKSNVTNL. A helical transmembrane segment spans residues 79–99; that stretch reads LIANLAFSDFLMCLICQPLTV. Residues 100–116 lie on the Extracellular side of the membrane; that stretch reads TYTIMDYWIFGEVLCKM. A disulfide bridge links cysteine 114 with cysteine 201. The chain crosses the membrane as a helical span at residues 117–137; that stretch reads LTFIQCMSVTVSILSLVLVAL. Residues 138-155 lie on the Cytoplasmic side of the membrane; it reads ERHQLIINPTGWKPSISQ. The helical transmembrane segment at 156–176 threads the bilayer; the sequence is AYLGIVVIWFISCFLSLPFLA. Topologically, residues 177-211 are extracellular; sequence NSILNDLFHYNHSKVVEFLEDKVVCFVSWSSDHHR. Asparagine 187 carries N-linked (GlcNAc...) asparagine glycosylation. The chain crosses the membrane as a helical span at residues 212-232; the sequence is LIYTTFLLLFQYCVPLAFILV. At 233-262 the chain is on the cytoplasmic side; the sequence is CYMRIYQRLQRQRRAFHTHTCSSRVGQMKR. A helical membrane pass occupies residues 263–283; the sequence is INGMLMAMVTAFAVLWLPLHV. Residues 284–301 lie on the Extracellular side of the membrane; sequence FNTLEDWYQEAIPACHGN. The helical transmembrane segment at 302 to 322 threads the bilayer; that stretch reads LIFLMCHLFAMASTCVNPFIY. The Cytoplasmic segment spans residues 323–375; it reads GFLNINFKKDIKALVLTCRCRPPQGEPEPLPLSTVHTDLSKGSMRMGSKSNVM. A lipid anchor (S-palmitoyl cysteine) is attached at cysteine 340.

This sequence belongs to the G-protein coupled receptor 1 family. In terms of tissue distribution, detected in colon and brain.

The protein localises to the cell membrane. G protein-coupled receptor for PPY/pancreatic polypeptide/PP that is negatively coupled to cAMP. Has much lower affinity for the NPY/neuropeptide Y and PYY/peptide YY. In Rattus norvegicus (Rat), this protein is Neuropeptide Y receptor type 4 (Npy4r).